The sequence spans 29 residues: Cyclotide mela-2 (29 aa).

The segment at residues 1–29 is a cross-link (cyclopeptide (Gly-Asp)); sequence GKPTCGETCFKGKCYTPGCTCSYPLCKKD. Intrachain disulfides connect Cys-5–Cys-19, Cys-9–Cys-21, and Cys-14–Cys-26.

In terms of processing, this is a cyclic peptide. Contains 3 disulfide bonds.

In terms of biological role, probably participates in a plant defense mechanism (Potential). Binds to and induces leakage in phospholipd membranes, particularly ones containing 1-palmitoyl-2-oleophosphatidylethanolamine (POPE). In vitro, displays cytotoxicity against cultured cells but no hemolytic activity towards fresh erythrocytes. Not active against Gram-negative bacterium E.coli ATCC 25922 or Gram-positive bacterium S.aureus ATCC 25923 up to a concentration of 64 uM. This chain is Cyclotide mela-2, found in Melicytus latifolius (Norfolk Island mahoe).